A 675-amino-acid polypeptide reads, in one-letter code: Putative methyl-accepting chemotaxis AlkN (675 aa).

2 helical membrane passes run 24-44 and 303-323; these read IALY…FLLS and FPSV…FFII. The region spanning 343–394 is the HAMP domain; that stretch reads QRNQAAILRLLDELGDLADGDLTVQATVTEDFTGAIADSINYSIDQLRNLVQ. The 237-residue stretch at 399-635 folds into the Methyl-accepting transducer domain; the sequence is SAVQVASAAQ…HISNTMNVIQ (237 aa).

Belongs to the methyl-accepting chemotaxis (MCP) protein family.

Its subcellular location is the membrane. It participates in hydrocarbon metabolism; alkane degradation. Its function is as follows. Chemotactic-signal transducers respond to changes in the concentration of attractants and repellents in the environment, transduce a signal from the outside to the inside of the cell, and facilitate sensory adaptation through the variation of the level of methylation. This is Putative methyl-accepting chemotaxis AlkN from Alcanivorax borkumensis (strain ATCC 700651 / DSM 11573 / NCIMB 13689 / SK2).